Consider the following 665-residue polypeptide: Translation factor GUF1 homolog, mitochondrial (665 aa).

The N-terminal 35 residues, 1-35 (MAGAAVLRRSARRIYRHLAAAPAFSRSVLQQPKRL), are a transit peptide targeting the mitochondrion. The segment at 34–53 (RLLSSQSSPEHGARGAVSGS) is disordered. One can recognise a tr-type G domain in the interval 61-249 (ERVRNFSIIA…AVIERIPSPP (189 aa)). GTP-binding positions include 70 to 77 (AHVDHGKS), 142 to 146 (DTPGH), and 196 to 199 (NKID).

The protein belongs to the TRAFAC class translation factor GTPase superfamily. Classic translation factor GTPase family. LepA subfamily.

The protein resides in the mitochondrion inner membrane. The enzyme catalyses GTP + H2O = GDP + phosphate + H(+). Functionally, promotes mitochondrial protein synthesis. May act as a fidelity factor of the translation reaction, by catalyzing a one-codon backward translocation of tRNAs on improperly translocated ribosomes. Binds to mitochondrial ribosomes in a GTP-dependent manner. In Sorghum bicolor (Sorghum), this protein is Translation factor GUF1 homolog, mitochondrial.